The following is a 531-amino-acid chain: MILPAPHVEYFLLAPMLIVFSVAVAGVLAEAFLPRRWRYGAQVTLALGGSAVALIAVIVVARSIHGSGHAAVLGAIAVDRATLFLQGTVLLVTIMAVVFMAERSARVSPQRQNTLAVARLPGLDSFTPQASAVPGSDAERQAERAGATQTELFPLAMLSVGGMMVFPASNDLLTMFVALEVLSLPLYLMCGLARNRRLLSQEAAMKYFLLGAFSSAFFLYGVALLYGATGTLTLPGIRDALAARTDDSMALAGVALLAVGLLFKVGAVPFHSWIPDVYQGAPTPITGFMAAATKVAAFGALLRVVYVALPPLHDQWRPVLWAIAILTMTVGTVTAVNQTNVKRMLAYSSVAHVGFILTGVIADNPAGLSATLFYLVAYSFSTMGAFAIVGLVRGADGSAGSEDADLSHWAGLGQRSPIVGVMLSMFLLAFAGIPLTSGFVSKFAVFRAAASAGAVPLVIVGVISSGVAAYFYVRVIVSMFFTEESGDTPHVAAPGVLSKAAIAVCTVVTVVLGIAPQPVLDLADQAAQLLR.

14 helical membrane-spanning segments follow: residues 8-28 (VEYF…AGVL), 41-61 (AQVT…IVVA), 81-101 (ATLF…VFMA), 146-166 (GATQ…MMVF), 172-192 (LLTM…MCGL), 208-228 (FLLG…LYGA), 250-270 (ALAG…AVPF), 282-302 (PTPI…GALL), 318-338 (PVLW…AVNQ), 350-370 (VAHV…GLSA), 372-392 (LFYL…VGLV), 418-438 (IVGV…LTSG), 453-473 (GAVP…YFYV), and 500-520 (AAIA…QPVL).

The protein belongs to the complex I subunit 2 family. In terms of assembly, NDH-1 is composed of 14 different subunits. Subunits NuoA, H, J, K, L, M, N constitute the membrane sector of the complex.

It is found in the cell membrane. The enzyme catalyses a quinone + NADH + 5 H(+)(in) = a quinol + NAD(+) + 4 H(+)(out). NDH-1 shuttles electrons from NADH, via FMN and iron-sulfur (Fe-S) centers, to quinones in the respiratory chain. The immediate electron acceptor for the enzyme in this species is believed to be a menaquinone. Couples the redox reaction to proton translocation (for every two electrons transferred, four hydrogen ions are translocated across the cytoplasmic membrane), and thus conserves the redox energy in a proton gradient. This Mycobacterium bovis (strain ATCC BAA-935 / AF2122/97) protein is NADH-quinone oxidoreductase subunit N.